We begin with the raw amino-acid sequence, 261 residues long: Sulfur carrier protein FdhD (261 aa).

Cys105 acts as the Cysteine persulfide intermediate in catalysis. 245–250 (FIRGDR) lines the Mo-bis(molybdopterin guanine dinucleotide) pocket.

It belongs to the FdhD family.

Its subcellular location is the cytoplasm. Required for formate dehydrogenase (FDH) activity. Acts as a sulfur carrier protein that transfers sulfur from IscS to the molybdenum cofactor prior to its insertion into FDH. The chain is Sulfur carrier protein FdhD from Listeria monocytogenes serotype 4b (strain F2365).